A 962-amino-acid polypeptide reads, in one-letter code: Glycine dehydrogenase (decarboxylating) (962 aa).

Lys-709 carries the post-translational modification N6-(pyridoxal phosphate)lysine.

Belongs to the GcvP family. In terms of assembly, the glycine cleavage system is composed of four proteins: P, T, L and H. Pyridoxal 5'-phosphate serves as cofactor.

It carries out the reaction N(6)-[(R)-lipoyl]-L-lysyl-[glycine-cleavage complex H protein] + glycine + H(+) = N(6)-[(R)-S(8)-aminomethyldihydrolipoyl]-L-lysyl-[glycine-cleavage complex H protein] + CO2. The glycine cleavage system catalyzes the degradation of glycine. The P protein binds the alpha-amino group of glycine through its pyridoxal phosphate cofactor; CO(2) is released and the remaining methylamine moiety is then transferred to the lipoamide cofactor of the H protein. In Shewanella baltica (strain OS155 / ATCC BAA-1091), this protein is Glycine dehydrogenase (decarboxylating).